The following is a 79-amino-acid chain: Sulfur carrier protein TusA (79 aa).

Cys17 serves as the catalytic Cysteine persulfide intermediate.

This sequence belongs to the sulfur carrier protein TusA family.

The protein localises to the cytoplasm. Its function is as follows. Sulfur carrier protein which probably makes part of a sulfur-relay system. In Mannheimia succiniciproducens (strain KCTC 0769BP / MBEL55E), this protein is Sulfur carrier protein TusA.